Reading from the N-terminus, the 547-residue chain is Chaperonin GroEL (547 aa).

Residues 30–33 (TLGP), Lys51, 87–91 (DGTTT), Gly415, and Asp496 each bind ATP. A disordered region spans residues 527 to 547 (KKDSPAMPGGGGMGGMGGMDF). Over residues 534-547 (PGGGGMGGMGGMDF) the composition is skewed to gly residues.

Belongs to the chaperonin (HSP60) family. As to quaternary structure, forms a cylinder of 14 subunits composed of two heptameric rings stacked back-to-back. Interacts with the co-chaperonin GroES.

Its subcellular location is the cytoplasm. It catalyses the reaction ATP + H2O + a folded polypeptide = ADP + phosphate + an unfolded polypeptide.. Functionally, together with its co-chaperonin GroES, plays an essential role in assisting protein folding. The GroEL-GroES system forms a nano-cage that allows encapsulation of the non-native substrate proteins and provides a physical environment optimized to promote and accelerate protein folding. This Methylocella silvestris (strain DSM 15510 / CIP 108128 / LMG 27833 / NCIMB 13906 / BL2) protein is Chaperonin GroEL.